The following is a 503-amino-acid chain: Aspartyl/glutamyl-tRNA(Asn/Gln) amidotransferase subunit B (503 aa).

The protein belongs to the GatB/GatE family. GatB subfamily. In terms of assembly, heterotrimer of A, B and C subunits.

It catalyses the reaction L-glutamyl-tRNA(Gln) + L-glutamine + ATP + H2O = L-glutaminyl-tRNA(Gln) + L-glutamate + ADP + phosphate + H(+). It carries out the reaction L-aspartyl-tRNA(Asn) + L-glutamine + ATP + H2O = L-asparaginyl-tRNA(Asn) + L-glutamate + ADP + phosphate + 2 H(+). Functionally, allows the formation of correctly charged Asn-tRNA(Asn) or Gln-tRNA(Gln) through the transamidation of misacylated Asp-tRNA(Asn) or Glu-tRNA(Gln) in organisms which lack either or both of asparaginyl-tRNA or glutaminyl-tRNA synthetases. The reaction takes place in the presence of glutamine and ATP through an activated phospho-Asp-tRNA(Asn) or phospho-Glu-tRNA(Gln). In Mycobacterium avium (strain 104), this protein is Aspartyl/glutamyl-tRNA(Asn/Gln) amidotransferase subunit B.